Here is a 646-residue protein sequence, read N- to C-terminus: MAPAVGIDLGTTYSCVGVFREDRCEIIANDQGNRTTPSFVAFTDTERLVGDAAKNQVAMNPANTVFDAKRLIGRKFSDPEVQADMKHFPFKVIDRGGKPVIQVEFKGETKVFTPEEISAMILQKMKETAEAYLGGTVNNAVVTVPAYFNDSQRQATKDAGLIAGLNVLRIINEPTAAAIAYGLDKKVEGERNVLIFDLGGGTFDVSLLTIEEGIFEVKSTAGDTHLGGEDFDNRLVNHFVQEFKRKHKKDLSTNARALRRLRTACERAKRTLSSSAQTSIEIDSLFEGIDFYTSITRARFEELCQDLFRSTLQPVDRVLTDAKIDKSQVHEIVLVGGSTRIPRIQKLISDYFNGKEPNKSINPDEAVAYGAAVQAAILSGDTSSKSTSEILLLDVAPLSLGIETAGGMMTKLIPRNTTIPTKKSEVFSTFSDNQPGVLIQVYEGERQRTKDNNLLGKFELTGIPPAPRGVPQIEVTFDVDANGIMNVSALEKGTGKTNQITITNDKGRLSKEEIERMLAEAEKFKEEDEAEAKRVAAKNGLESYAYSLRNTLSDSKVDEKLDAADKEKLKSEIDKIVAWLDENQQATREEYEERQKELEAIANPIMMKFYGAGGAPGGMPGAAPGGFPGGAPGSNDNEGPTVEEVD.

The segment covering 613–632 (GGAPGGMPGAAPGGFPGGAP) has biased composition (gly residues). A disordered region spans residues 613–646 (GGAPGGMPGAAPGGFPGGAPGSNDNEGPTVEEVD).

The protein belongs to the heat shock protein 70 family.

The polypeptide is Heat shock 70 kDa protein (hsps-1) (Neurospora crassa (strain ATCC 24698 / 74-OR23-1A / CBS 708.71 / DSM 1257 / FGSC 987)).